The sequence spans 76 residues: Exodeoxyribonuclease 7 small subunit (76 aa).

It belongs to the XseB family. Heterooligomer composed of large and small subunits.

It localises to the cytoplasm. It carries out the reaction Exonucleolytic cleavage in either 5'- to 3'- or 3'- to 5'-direction to yield nucleoside 5'-phosphates.. Bidirectionally degrades single-stranded DNA into large acid-insoluble oligonucleotides, which are then degraded further into small acid-soluble oligonucleotides. This chain is Exodeoxyribonuclease 7 small subunit, found in Lactiplantibacillus plantarum (strain ATCC BAA-793 / NCIMB 8826 / WCFS1) (Lactobacillus plantarum).